We begin with the raw amino-acid sequence, 335 residues long: tRNA-dihydrouridine(20/20a) synthase (335 aa).

FMN-binding positions include 19–21 and Gln72; that span reads PMM. The Proton donor role is filled by Cys102. FMN is bound by residues Lys141, His173, 213–215, and 235–236; these read NGG and GR.

This sequence belongs to the Dus family. DusA subfamily. FMN serves as cofactor.

It catalyses the reaction 5,6-dihydrouridine(20) in tRNA + NADP(+) = uridine(20) in tRNA + NADPH + H(+). It carries out the reaction 5,6-dihydrouridine(20) in tRNA + NAD(+) = uridine(20) in tRNA + NADH + H(+). The enzyme catalyses 5,6-dihydrouridine(20a) in tRNA + NADP(+) = uridine(20a) in tRNA + NADPH + H(+). The catalysed reaction is 5,6-dihydrouridine(20a) in tRNA + NAD(+) = uridine(20a) in tRNA + NADH + H(+). Its function is as follows. Catalyzes the synthesis of 5,6-dihydrouridine (D), a modified base found in the D-loop of most tRNAs, via the reduction of the C5-C6 double bond in target uridines. Specifically modifies U20 and U20a in tRNAs. The polypeptide is tRNA-dihydrouridine(20/20a) synthase (Xanthomonas campestris pv. campestris (strain ATCC 33913 / DSM 3586 / NCPPB 528 / LMG 568 / P 25)).